We begin with the raw amino-acid sequence, 408 residues long: Argininosuccinate synthase (408 aa).

ATP contacts are provided by residues 10–18 (AYSGGLDTS) and Ala37. The L-citrulline site is built by Tyr90 and Ser95. Residue Gly120 coordinates ATP. Positions 122, 126, and 127 each coordinate L-aspartate. Asn126 contributes to the L-citrulline binding site. The L-citrulline site is built by Arg130, Ser181, Ser190, Glu266, and Tyr278.

The protein belongs to the argininosuccinate synthase family. Type 1 subfamily. Homotetramer.

The protein resides in the cytoplasm. It catalyses the reaction L-citrulline + L-aspartate + ATP = 2-(N(omega)-L-arginino)succinate + AMP + diphosphate + H(+). It functions in the pathway amino-acid biosynthesis; L-arginine biosynthesis; L-arginine from L-ornithine and carbamoyl phosphate: step 2/3. This chain is Argininosuccinate synthase, found in Chromobacterium violaceum (strain ATCC 12472 / DSM 30191 / JCM 1249 / CCUG 213 / NBRC 12614 / NCIMB 9131 / NCTC 9757 / MK).